A 229-amino-acid chain; its full sequence is Potassium/proton antiporter CemA (229 aa).

4 consecutive transmembrane segments (helical) span residues F7–F27, L114–L134, I154–I174, and I189–I209.

Belongs to the CemA family.

Its subcellular location is the plastid. It localises to the chloroplast inner membrane. It carries out the reaction K(+)(in) + H(+)(out) = K(+)(out) + H(+)(in). Contributes to K(+)/H(+) antiport activity by supporting proton efflux to control proton extrusion and homeostasis in chloroplasts in a light-dependent manner to modulate photosynthesis. Prevents excessive induction of non-photochemical quenching (NPQ) under continuous-light conditions. Indirectly promotes efficient inorganic carbon uptake into chloroplasts. The sequence is that of Potassium/proton antiporter CemA from Gossypium barbadense (Sea Island cotton).